Here is a 309-residue protein sequence, read N- to C-terminus: MRVIFAGTPPFAAAALEALVAAGHEIVLVLTQPDRPAGRGMKLAASAVKQAALAHGLPVYQPTTLKTPEAQARLADCAADVMVVAAYGLILPQAVLDLPRLGCLNIHASLLPRWRGAAPIQRAILAGDCETGITIMQMAAGLDTGAMLAKTVVPIADADTAATLHDALAVAGAAAIVSALSAYDTLVPQTQDEREASYAAKLSKEEARLDWQQPAEALARAVRAFNPVPGAWTLLAGAPFKILRAEAAPQGEADAPPGTVLRADPAGIVVACGGGALVLHEIQAAGSKRMTAAAFLAGRALSAGTRLGA.

109 to 112 (SLLP) is a (6S)-5,6,7,8-tetrahydrofolate binding site.

The protein belongs to the Fmt family.

It catalyses the reaction L-methionyl-tRNA(fMet) + (6R)-10-formyltetrahydrofolate = N-formyl-L-methionyl-tRNA(fMet) + (6S)-5,6,7,8-tetrahydrofolate + H(+). Its function is as follows. Attaches a formyl group to the free amino group of methionyl-tRNA(fMet). The formyl group appears to play a dual role in the initiator identity of N-formylmethionyl-tRNA by promoting its recognition by IF2 and preventing the misappropriation of this tRNA by the elongation apparatus. The chain is Methionyl-tRNA formyltransferase from Thiobacillus denitrificans (strain ATCC 25259 / T1).